The chain runs to 429 residues: Patatin-like phospholipase domain-containing protein 5 (429 aa).

One can recognise a PNPLA domain in the interval 12–181; that stretch reads LSFSGAGYLG…SNNLPFADCP (170 aa). The GXGXXG signature appears at 16–21; it reads GAGYLG. A GXSXG motif is present at residues 47-51; the sequence is GSSSG. Residue S49 is the Nucleophile of the active site. The active-site Proton acceptor is the D168. The short motif at 168–170 is the DGA/G element; it reads DGA.

In terms of tissue distribution, expressed in brain and pituitary gland.

The enzyme catalyses a triacylglycerol + H2O = a diacylglycerol + a fatty acid + H(+). Its function is as follows. Has abundant triacylglycerol lipase activity. This Homo sapiens (Human) protein is Patatin-like phospholipase domain-containing protein 5.